A 494-amino-acid chain; its full sequence is Glycogen synthase (494 aa).

Residue lysine 24 participates in ADP-alpha-D-glucose binding.

This sequence belongs to the glycosyltransferase 1 family. Bacterial/plant glycogen synthase subfamily.

It carries out the reaction [(1-&gt;4)-alpha-D-glucosyl](n) + ADP-alpha-D-glucose = [(1-&gt;4)-alpha-D-glucosyl](n+1) + ADP + H(+). It functions in the pathway glycan biosynthesis; glycogen biosynthesis. In terms of biological role, synthesizes alpha-1,4-glucan chains using ADP-glucose. The protein is Glycogen synthase of Aromatoleum aromaticum (strain DSM 19018 / LMG 30748 / EbN1) (Azoarcus sp. (strain EbN1)).